Reading from the N-terminus, the 169-residue chain is Cell division inhibitor SulA (169 aa).

The segment at 106–112 (ALRTGNY) is ftsZ binding. Positions 162-169 (KIHSNLYH) are lon protease binding.

It belongs to the SulA family. As to quaternary structure, interacts with FtsZ. In terms of processing, is rapidly cleaved and degraded by the Lon protease once DNA damage is repaired.

Functionally, component of the SOS system and an inhibitor of cell division. Accumulation of SulA causes rapid cessation of cell division and the appearance of long, non-septate filaments. In the presence of GTP, binds a polymerization-competent form of FtsZ in a 1:1 ratio, thus inhibiting FtsZ polymerization and therefore preventing it from participating in the assembly of the Z ring. This mechanism prevents the premature segregation of damaged DNA to daughter cells during cell division. The protein is Cell division inhibitor SulA of Salmonella agona (strain SL483).